The primary structure comprises 301 residues: Sulfate adenylyltransferase subunit 2 (301 aa).

Residues 282-301 (RLIDRDEAGSMEKKKREGYF) are disordered.

This sequence belongs to the PAPS reductase family. CysD subfamily. Heterodimer composed of CysD, the smaller subunit, and CysN.

It carries out the reaction sulfate + ATP + H(+) = adenosine 5'-phosphosulfate + diphosphate. It functions in the pathway sulfur metabolism; hydrogen sulfide biosynthesis; sulfite from sulfate: step 1/3. In terms of biological role, with CysN forms the ATP sulfurylase (ATPS) that catalyzes the adenylation of sulfate producing adenosine 5'-phosphosulfate (APS) and diphosphate, the first enzymatic step in sulfur assimilation pathway. APS synthesis involves the formation of a high-energy phosphoric-sulfuric acid anhydride bond driven by GTP hydrolysis by CysN coupled to ATP hydrolysis by CysD. This chain is Sulfate adenylyltransferase subunit 2, found in Chelativorans sp. (strain BNC1).